The following is a 568-amino-acid chain: Autophagy-related protein 17 (568 aa).

2 disordered regions span residues 1–59 and 522–568; these read MASF…DSSE and SYEM…ERPF. Residues 522–546 show a composition bias toward basic and acidic residues; it reads SYEMEAHGEPENEGKVETAYERETE.

It belongs to the ATG17 family.

It localises to the cytoplasm. The protein localises to the preautophagosomal structure membrane. Its function is as follows. Autophagy-specific protein that functions in response to autophagy-inducing signals as a scaffold to recruit other ATG proteins to organize pre-autophagosomal structure (PAS) formation. Modulates the timing and magnitude of the autophagy response, such as the size of the sequestering vesicles. Plays particularly a role in pexophagy and nucleophagy. The protein is Autophagy-related protein 17 (apg-9) of Neurospora crassa (strain ATCC 24698 / 74-OR23-1A / CBS 708.71 / DSM 1257 / FGSC 987).